A 198-amino-acid polypeptide reads, in one-letter code: KinB-signaling pathway activation protein (198 aa).

6 consecutive transmembrane segments (helical) span residues 9 to 29, 42 to 62, 90 to 110, 117 to 137, 146 to 166, and 173 to 193; these read FFFSILAVGALITSIVGFALK, AGQIFSVLFWFIGVGMIFSVI, LQLFFILFVAFDLMYVRFLFF, LAGYAWLPVFLLIFGVITAYI, TFVSSLFLMVVITALEWFPAL, and WLYLMLFPLMACNAFQLLMLP.

The protein resides in the cell membrane. In terms of biological role, involved in the activation of the KinB signaling pathway of sporulation. The chain is KinB-signaling pathway activation protein (kbaA) from Bacillus subtilis (strain 168).